Here is a 100-residue protein sequence, read N- to C-terminus: UPF0251 protein VVA1436 (100 aa).

The protein belongs to the UPF0251 family.

This is UPF0251 protein VVA1436 from Vibrio vulnificus (strain YJ016).